Reading from the N-terminus, the 472-residue chain is 3-isopropylmalate dehydratase large subunit (472 aa).

3 residues coordinate [4Fe-4S] cluster: Cys353, Cys414, and Cys417.

This sequence belongs to the aconitase/IPM isomerase family. LeuC type 1 subfamily. Heterodimer of LeuC and LeuD. Requires [4Fe-4S] cluster as cofactor.

It carries out the reaction (2R,3S)-3-isopropylmalate = (2S)-2-isopropylmalate. It participates in amino-acid biosynthesis; L-leucine biosynthesis; L-leucine from 3-methyl-2-oxobutanoate: step 2/4. In terms of biological role, catalyzes the isomerization between 2-isopropylmalate and 3-isopropylmalate, via the formation of 2-isopropylmaleate. This is 3-isopropylmalate dehydratase large subunit from Psychrobacter cryohalolentis (strain ATCC BAA-1226 / DSM 17306 / VKM B-2378 / K5).